We begin with the raw amino-acid sequence, 188 residues long: Threonylcarbamoyl-AMP synthase (188 aa).

Positions 3–188 (QLHPSEIKDL…RSGKILRNGQ (186 aa)) constitute a YrdC-like domain.

This sequence belongs to the SUA5 family. TsaC subfamily.

The protein resides in the cytoplasm. It catalyses the reaction L-threonine + hydrogencarbonate + ATP = L-threonylcarbamoyladenylate + diphosphate + H2O. Functionally, required for the formation of a threonylcarbamoyl group on adenosine at position 37 (t(6)A37) in tRNAs that read codons beginning with adenine. Catalyzes the conversion of L-threonine, HCO(3)(-)/CO(2) and ATP to give threonylcarbamoyl-AMP (TC-AMP) as the acyladenylate intermediate, with the release of diphosphate. This Shewanella sp. (strain ANA-3) protein is Threonylcarbamoyl-AMP synthase.